The chain runs to 192 residues: Soluble inorganic pyrophosphatase 2 (192 aa).

Residues Lys38, Arg52, and Tyr64 each contribute to the substrate site. The Mg(2+) site is built by Asp74, Asp79, and Asp111. Residue Tyr148 coordinates substrate.

Monomer. Requires Mg(2+) as cofactor. In terms of processing, the N-terminus is blocked.

It localises to the mitochondrion. It catalyses the reaction diphosphate + H2O = 2 phosphate + H(+). This Chlamydomonas reinhardtii (Chlamydomonas smithii) protein is Soluble inorganic pyrophosphatase 2 (ppa2).